We begin with the raw amino-acid sequence, 665 residues long: UvrABC system protein B (665 aa).

The 154-residue stretch at 25–178 folds into the Helicase ATP-binding domain; sequence ASLQAEHRFQ…RQLLRDLTTI (154 aa). ATP is bound at residue 38 to 45; sequence GATGTGKT. The Beta-hairpin signature appears at 91–114; it reads YYDYYQPEAYIPVTDTYIEKTAAI. The region spanning 429–595 is the Helicase C-terminal domain; the sequence is QVDDLLGEVR…PIVKKASNAI (167 aa). The region spanning 626 to 661 is the UVR domain; that stretch reads PELITQLEAQMKEAAKKLEFEEAAKYRDRIKQLRDK.

It belongs to the UvrB family. As to quaternary structure, forms a heterotetramer with UvrA during the search for lesions. Interacts with UvrC in an incision complex.

The protein resides in the cytoplasm. In terms of biological role, the UvrABC repair system catalyzes the recognition and processing of DNA lesions. A damage recognition complex composed of 2 UvrA and 2 UvrB subunits scans DNA for abnormalities. Upon binding of the UvrA(2)B(2) complex to a putative damaged site, the DNA wraps around one UvrB monomer. DNA wrap is dependent on ATP binding by UvrB and probably causes local melting of the DNA helix, facilitating insertion of UvrB beta-hairpin between the DNA strands. Then UvrB probes one DNA strand for the presence of a lesion. If a lesion is found the UvrA subunits dissociate and the UvrB-DNA preincision complex is formed. This complex is subsequently bound by UvrC and the second UvrB is released. If no lesion is found, the DNA wraps around the other UvrB subunit that will check the other stand for damage. This chain is UvrABC system protein B, found in Cyanothece sp. (strain PCC 7425 / ATCC 29141).